We begin with the raw amino-acid sequence, 380 residues long: Cytochrome b (380 aa).

4 helical membrane passes run 34–54, 78–99, 114–134, and 179–199; these read FGSL…LLAM, WLIR…FLHI, WNTG…GYVL, and FFAL…THLM. 2 residues coordinate heme b: H84 and H98. Positions 183 and 197 each coordinate heme b. An a ubiquinone-binding site is contributed by H202. 4 helical membrane passes run 227-247, 289-309, 321-341, and 348-368; these read LKDI…ALFS, LGGV…PFLH, LSQA…WVGS, and FIII…SLLP.

Belongs to the cytochrome b family. The cytochrome bc1 complex contains 11 subunits: 3 respiratory subunits (MT-CYB, CYC1 and UQCRFS1), 2 core proteins (UQCRC1 and UQCRC2) and 6 low-molecular weight proteins (UQCRH/QCR6, UQCRB/QCR7, UQCRQ/QCR8, UQCR10/QCR9, UQCR11/QCR10 and a cleavage product of UQCRFS1). This cytochrome bc1 complex then forms a dimer. The cofactor is heme b.

The protein resides in the mitochondrion inner membrane. Component of the ubiquinol-cytochrome c reductase complex (complex III or cytochrome b-c1 complex) that is part of the mitochondrial respiratory chain. The b-c1 complex mediates electron transfer from ubiquinol to cytochrome c. Contributes to the generation of a proton gradient across the mitochondrial membrane that is then used for ATP synthesis. The sequence is that of Cytochrome b (MT-CYB) from Crossoptilon crossoptilon (White-eared pheasant).